The sequence spans 1396 residues: DNA-directed RNA polymerase subunit beta' (1396 aa).

Residues Cys71, Cys73, Cys86, and Cys89 each contribute to the Zn(2+) site. Positions 462, 464, and 466 each coordinate Mg(2+). Residues Cys810, Cys884, Cys891, and Cys894 each coordinate Zn(2+). Residues 1372–1382 (DEQLAQQREDA) show a composition bias toward basic and acidic residues. Positions 1372 to 1396 (DEQLAQQREDAMEPLPAEIALSDAE) are disordered.

It belongs to the RNA polymerase beta' chain family. The RNAP catalytic core consists of 2 alpha, 1 beta, 1 beta' and 1 omega subunit. When a sigma factor is associated with the core the holoenzyme is formed, which can initiate transcription. Requires Mg(2+) as cofactor. The cofactor is Zn(2+).

It catalyses the reaction RNA(n) + a ribonucleoside 5'-triphosphate = RNA(n+1) + diphosphate. Its function is as follows. DNA-dependent RNA polymerase catalyzes the transcription of DNA into RNA using the four ribonucleoside triphosphates as substrates. In Caulobacter vibrioides (strain ATCC 19089 / CIP 103742 / CB 15) (Caulobacter crescentus), this protein is DNA-directed RNA polymerase subunit beta'.